A 135-amino-acid chain; its full sequence is uncharacterized protein (135 aa).

Residues 1–80 (MRSSSLPGAR…QRGSCASANA (80 aa)) are disordered. The segment covering 54 to 65 (GARGGGRRGWGG) has biased composition (gly residues).

This is an uncharacterized protein from Homo sapiens (Human).